The primary structure comprises 952 residues: Plasma membrane ATPase 4 (952 aa).

Residues 1 to 64 (MAKAISLEEI…EKNESKILKF (64 aa)) are Cytoplasmic-facing. The chain crosses the membrane as a helical span at residues 65-84 (LGFMWNPLSWVMEAAAVMAI). The Extracellular segment spans residues 85–96 (ALANGDGKPPDW). The helical transmembrane segment at 97–117 (QDFIGIICLLVINSTISFIEE) threads the bilayer. At 118 to 246 (NNAGNAAAAL…GHFQKVLTAI (129 aa)) the chain is on the cytoplasmic side. Residues 247–267 (GNFCICSIAIGMLVEIIVMYP) traverse the membrane as a helical segment. The Extracellular segment spans residues 268 to 277 (IQHRKYRDGI). A helical membrane pass occupies residues 278–299 (DNLLVLLIGGIPIAMPTVLSVT). Topologically, residues 300 to 646 (MAIGSHRLSQ…TSRAIFQRMK (347 aa)) are cytoplasmic. The active-site 4-aspartylphosphate intermediate is Asp332. Asp591 and Asp595 together coordinate Mg(2+). Residues 647 to 668 (NYTIYAVSITIRIVFGFMFIAL) form a helical membrane-spanning segment. Over 669 to 673 (IWKYD) the chain is Extracellular. A helical membrane pass occupies residues 674 to 696 (FSAFMVLIIAILNDGTIMTISKD). The Cytoplasmic segment spans residues 697 to 712 (RVKPSPMPDSWKLKEI). Residues 713–733 (FATGVVLGGYQALMTVVFFWA) traverse the membrane as a helical segment. Over 734-754 (MHDTDFFSDKFGVKSLRNSDE) the chain is Extracellular. Residues 755-775 (EMMSALYLQVSIISQALIFVT) traverse the membrane as a helical segment. Over 776–787 (RSRSWSFLERPG) the chain is Cytoplasmic. A helical transmembrane segment spans residues 788–808 (MLLVIAFMIAQLVATLIAVYA). Over 809–817 (NWAFARVKG) the chain is Extracellular. A helical membrane pass occupies residues 818 to 838 (CGWGWAGVIWLYSIIFYLPLD). Topologically, residues 839–952 (IMKFAIRYIL…IETIQQHYTV (114 aa)) are cytoplasmic.

Belongs to the cation transport ATPase (P-type) (TC 3.A.3) family. Type IIIA subfamily. Expressed at high levels in root, stem, leaf and flower.

The protein resides in the cell membrane. The enzyme catalyses ATP + H2O + H(+)(in) = ADP + phosphate + 2 H(+)(out). Functionally, the plasma membrane ATPase of plants and fungi is a hydrogen ion pump. The proton gradient it generates drives the active transport of nutrients by H(+)-symport. The resulting external acidification and/or internal alkinization may mediate growth responses. This chain is Plasma membrane ATPase 4 (PMA4), found in Nicotiana plumbaginifolia (Leadwort-leaved tobacco).